A 217-amino-acid polypeptide reads, in one-letter code: Large ribosomal subunit protein uL1 (217 aa).

This sequence belongs to the universal ribosomal protein uL1 family. In terms of assembly, component of the large ribosomal subunit (LSU). Mature N.crassa ribosomes consist of a small (40S) and a large (60S) subunit. The 40S small subunit contains 1 molecule of ribosomal RNA (18S rRNA) and at least 32 different proteins. The large 60S subunit contains 3 rRNA molecules (26S, 5.8S and 5S rRNA) and at least 42 different proteins. uL1 forms part of the L1 stalk.

It is found in the cytoplasm. Functionally, component of the ribosome, a large ribonucleoprotein complex responsible for the synthesis of proteins in the cell. The small ribosomal subunit (SSU) binds messenger RNAs (mRNAs) and translates the encoded message by selecting cognate aminoacyl-transfer RNA (tRNA) molecules. The large subunit (LSU) contains the ribosomal catalytic site termed the peptidyl transferase center (PTC), which catalyzes the formation of peptide bonds, thereby polymerizing the amino acids delivered by tRNAs into a polypeptide chain. The nascent polypeptides leave the ribosome through a tunnel in the LSU and interact with protein factors that function in enzymatic processing, targeting, and the membrane insertion of nascent chains at the exit of the ribosomal tunnel. uL1 forms part of the L1 stalk, a mobile element that plays a role in evacuating the exit-site tRNA. The protein is Large ribosomal subunit protein uL1 (crp-74) of Neurospora crassa (strain ATCC 24698 / 74-OR23-1A / CBS 708.71 / DSM 1257 / FGSC 987).